The sequence spans 346 residues: Nucleoplasmin-like protein ANO39 (346 aa).

Position 2 is an N-acetylserine (Ser2). Residue Asn85 is glycosylated (N-linked (GlcNAc...) asparagine). Positions 123-141 (DEEELEEDDEEEEEEDEVE) are enriched in acidic residues. The tract at residues 123–285 (DEEELEEDDE…KAKAKTDTKL (163 aa)) is disordered. Residue Ser145 is modified to Phosphoserine; by CDC2. A compositionally biased stretch (basic and acidic residues) spans 171 to 180 (AKLDKDADKK). Positions 181-247 (EDDDEEEDDE…EEEEDEDEES (67 aa)) are enriched in acidic residues. The N-linked (GlcNAc...) asparagine glycan is linked to Asn264. A compositionally biased stretch (basic and acidic residues) spans 271 to 285 (GDNKPKAKAKTDTKL).

The protein belongs to the nucleoplasmin family. Post-translationally, phosphorylation occurs in oocytes during the progression of the first meiotic M phase. No phosphorylation is observed in immature oocytes. In terms of tissue distribution, expressed specifically in the oocytes of the ovaries.

The protein localises to the nucleus. The protein resides in the nucleolus. It is found in the cytoplasm. Its function is as follows. Binds double-stranded RNA and both single-stranded and double-stranded DNA. This Patiria pectinifera (Starfish) protein is Nucleoplasmin-like protein ANO39.